The following is a 188-amino-acid chain: Protein salivary glands marred (188 aa).

The protein belongs to the TNFAIP8 family. Interacts with the Ste20-like MAP kinase msn.

The protein localises to the cytoplasm. Its subcellular location is the cytoskeleton. Functionally, important for modulating JNK signaling, cytoskeletal remodeling and autophagy in larval salivary glands. During salivary gland development, involved in the positive regulation of the JNK signaling pathway, acting downstream of the TNF ligand egr and upstream of bsk. This chain is Protein salivary glands marred, found in Drosophila melanogaster (Fruit fly).